Reading from the N-terminus, the 366-residue chain is Proline-rich protein 19 (366 aa).

Disordered regions lie at residues 1–53, 102–149, 256–286, and 301–338; these read MDPR…RDPC, ESHT…DLPV, TPAH…AAWG, and ATPP…WSPN. Basic residues predominate over residues 18–29; the sequence is GRIRRRKTRRER. Composition is skewed to polar residues over residues 104–113 and 256–265; these read HTPQLPTKPS and TPAHRGSQVQ. The span at 275–286 shows a compositional bias: low complexity; that stretch reads SSASSPSGAAWG. Positions 302–326 are enriched in pro residues; sequence TPPPPPPQPWDVRPPQPLPQPPSPL.

Interacts with CNTD1. Preferentially expressed in gonads.

The protein resides in the nucleus. Its subcellular location is the chromosome. Promotes meiotic crossing over formation through its interaction with CNTD1 by participating in the crossover differentiation step of crossover-specific recombination intermediates. The polypeptide is Proline-rich protein 19 (Mus musculus (Mouse)).